Consider the following 202-residue polypeptide: ATP-dependent Clp protease proteolytic subunit (202 aa).

S98 serves as the catalytic Nucleophile. The active site involves H123.

It belongs to the peptidase S14 family. Fourteen ClpP subunits assemble into 2 heptameric rings which stack back to back to give a disk-like structure with a central cavity, resembling the structure of eukaryotic proteasomes.

It localises to the cytoplasm. The enzyme catalyses Hydrolysis of proteins to small peptides in the presence of ATP and magnesium. alpha-casein is the usual test substrate. In the absence of ATP, only oligopeptides shorter than five residues are hydrolyzed (such as succinyl-Leu-Tyr-|-NHMec, and Leu-Tyr-Leu-|-Tyr-Trp, in which cleavage of the -Tyr-|-Leu- and -Tyr-|-Trp bonds also occurs).. Functionally, cleaves peptides in various proteins in a process that requires ATP hydrolysis. Has a chymotrypsin-like activity. Plays a major role in the degradation of misfolded proteins. In Magnetococcus marinus (strain ATCC BAA-1437 / JCM 17883 / MC-1), this protein is ATP-dependent Clp protease proteolytic subunit.